The sequence spans 925 residues: NADH:fumarate oxidoreductase (925 aa).

Residue Thr-447 is modified to FMN phosphoryl threonine. 7 residues coordinate FAD: Ala-492, Glu-511, Asn-519, Thr-520, Ala-525, Gly-526, and Val-633. Ala-525 contributes to the fumarate binding site. Position 525 (Ala-525) interacts with succinate. Succinate-binding residues include His-719, Ser-731, and Glu-732. Ser-731 and Glu-732 together coordinate fumarate. The Proton donor role is filled by Arg-756. Residue His-859 coordinates fumarate. His-859 contacts succinate. FAD-binding residues include His-860 and Glu-889. The fumarate site is built by Arg-899 and Gly-902. 2 residues coordinate succinate: Arg-899 and Gly-902. The FAD site is built by Ala-904 and Val-905.

The protein belongs to the FAD-dependent oxidoreductase 2 family. FRD/SDH subfamily. Monomer. FAD is required as a cofactor. FMN serves as cofactor. Post-translationally, is flavinylated on Thr-447 by ApbE2, encoded in a neighboring gene. Flavinylation is essential for catalytic activity.

The protein localises to the cytoplasm. The enzyme catalyses succinate + NAD(+) = fumarate + NADH + H(+). Functionally, catalyzes the anaerobic reduction of fumarate to succinate. Uses NADH as the inherent electron donor in this process. Is involved in anaerobic fumarate respiration in K.pneumoniae. In Klebsiella pneumoniae (strain 342), this protein is NADH:fumarate oxidoreductase.